We begin with the raw amino-acid sequence, 148 residues long: Lipoprotein signal peptidase (148 aa).

Transmembrane regions (helical) follow at residues 57–77 (VLLVLVTLLIMIGVIYYFIKY) and 88–105 (VSFIVSGALGNLYDRIFY). Active-site residues include Asp-110 and Asp-129. A helical membrane pass occupies residues 124-144 (TFNIADILVVVGTIMLAIFLL).

Belongs to the peptidase A8 family.

It localises to the cell membrane. It carries out the reaction Release of signal peptides from bacterial membrane prolipoproteins. Hydrolyzes -Xaa-Yaa-Zaa-|-(S,diacylglyceryl)Cys-, in which Xaa is hydrophobic (preferably Leu), and Yaa (Ala or Ser) and Zaa (Gly or Ala) have small, neutral side chains.. Its pathway is protein modification; lipoprotein biosynthesis (signal peptide cleavage). Functionally, this protein specifically catalyzes the removal of signal peptides from prolipoproteins. The protein is Lipoprotein signal peptidase of Clostridium novyi (strain NT).